The sequence spans 90 residues: Probable Fe(2+)-trafficking protein (90 aa).

It belongs to the Fe(2+)-trafficking protein family.

Functionally, could be a mediator in iron transactions between iron acquisition and iron-requiring processes, such as synthesis and/or repair of Fe-S clusters in biosynthetic enzymes. This Marinobacter nauticus (strain ATCC 700491 / DSM 11845 / VT8) (Marinobacter aquaeolei) protein is Probable Fe(2+)-trafficking protein.